Consider the following 307-residue polypeptide: Elongation factor Ts (307 aa).

Positions 79-82 (TDFV) are involved in Mg(2+) ion dislocation from EF-Tu.

The protein belongs to the EF-Ts family.

The protein localises to the cytoplasm. Functionally, associates with the EF-Tu.GDP complex and induces the exchange of GDP to GTP. It remains bound to the aminoacyl-tRNA.EF-Tu.GTP complex up to the GTP hydrolysis stage on the ribosome. In Rhizobium meliloti (strain 1021) (Ensifer meliloti), this protein is Elongation factor Ts.